Reading from the N-terminus, the 143-residue chain is Ribonuclease VapC33 (143 aa).

Asp-5 and Asp-108 together coordinate Mg(2+).

It belongs to the PINc/VapC protein family. The cofactor is Mg(2+).

Toxic component of a type II toxin-antitoxin (TA) system. An RNase. Its toxic effect is neutralized by coexpression with cognate antitoxin VapB33. The polypeptide is Ribonuclease VapC33 (Mycobacterium tuberculosis (strain CDC 1551 / Oshkosh)).